Consider the following 698-residue polypeptide: Elongation factor G (698 aa).

Positions 8–290 (ERYRNIGISA…AVIELLPSPT (283 aa)) constitute a tr-type G domain. Residues 17–24 (AHIDAGKT), 88–92 (DTPGH), and 142–145 (NKMD) each bind GTP.

Belongs to the TRAFAC class translation factor GTPase superfamily. Classic translation factor GTPase family. EF-G/EF-2 subfamily.

The protein resides in the cytoplasm. Catalyzes the GTP-dependent ribosomal translocation step during translation elongation. During this step, the ribosome changes from the pre-translocational (PRE) to the post-translocational (POST) state as the newly formed A-site-bound peptidyl-tRNA and P-site-bound deacylated tRNA move to the P and E sites, respectively. Catalyzes the coordinated movement of the two tRNA molecules, the mRNA and conformational changes in the ribosome. The chain is Elongation factor G from Chromobacterium violaceum (strain ATCC 12472 / DSM 30191 / JCM 1249 / CCUG 213 / NBRC 12614 / NCIMB 9131 / NCTC 9757 / MK).